The primary structure comprises 667 residues: DNA ligase (667 aa).

NAD(+) is bound by residues 34-38, 83-84, and Glu-114; these read DQEYD and SL. Residue Lys-116 is the N6-AMP-lysine intermediate of the active site. Arg-137, Glu-170, Lys-286, and Lys-310 together coordinate NAD(+). 4 residues coordinate Zn(2+): Cys-404, Cys-407, Cys-422, and Cys-427. Residues 588 to 667 enclose the BRCT domain; sequence HLAQKFENYR…EFQQLLSKED (80 aa).

Belongs to the NAD-dependent DNA ligase family. LigA subfamily. The cofactor is Mg(2+). It depends on Mn(2+) as a cofactor.

It carries out the reaction NAD(+) + (deoxyribonucleotide)n-3'-hydroxyl + 5'-phospho-(deoxyribonucleotide)m = (deoxyribonucleotide)n+m + AMP + beta-nicotinamide D-nucleotide.. In terms of biological role, DNA ligase that catalyzes the formation of phosphodiester linkages between 5'-phosphoryl and 3'-hydroxyl groups in double-stranded DNA using NAD as a coenzyme and as the energy source for the reaction. It is essential for DNA replication and repair of damaged DNA. This Spiroplasma citri protein is DNA ligase.